A 79-amino-acid polypeptide reads, in one-letter code: Large ribosomal subunit protein uL29 (79 aa).

Belongs to the universal ribosomal protein uL29 family.

In Gluconacetobacter diazotrophicus (strain ATCC 49037 / DSM 5601 / CCUG 37298 / CIP 103539 / LMG 7603 / PAl5), this protein is Large ribosomal subunit protein uL29.